The sequence spans 189 residues: Elongation factor P (189 aa).

This sequence belongs to the elongation factor P family.

The protein localises to the cytoplasm. It functions in the pathway protein biosynthesis; polypeptide chain elongation. Involved in peptide bond synthesis. Stimulates efficient translation and peptide-bond synthesis on native or reconstituted 70S ribosomes in vitro. Probably functions indirectly by altering the affinity of the ribosome for aminoacyl-tRNA, thus increasing their reactivity as acceptors for peptidyl transferase. In Pseudomonas putida (strain GB-1), this protein is Elongation factor P.